We begin with the raw amino-acid sequence, 508 residues long: Glucose-1-phosphate adenylyltransferase small subunit 1, chloroplastic (508 aa).

The disordered stretch occupies residues 1-27; it reads MSSIVTSGVINVPRSSSSSKNLSFSSS. The N-terminal 59 residues, 1–59, are a transit peptide targeting the chloroplast; sequence MSSIVTSGVINVPRSSSSSKNLSFSSSSQLSGNKILTVSGNGAPRGRCTLKHVFLTPKA. A compositionally biased stretch (low complexity) spans 15–27; sequence SSSSSKNLSFSSS.

Belongs to the bacterial/plant glucose-1-phosphate adenylyltransferase family. As to quaternary structure, heterotetramer. As to expression, seeds.

It is found in the plastid. The protein localises to the chloroplast. The catalysed reaction is alpha-D-glucose 1-phosphate + ATP + H(+) = ADP-alpha-D-glucose + diphosphate. Its pathway is glycan biosynthesis; starch biosynthesis. Its activity is regulated as follows. Activated by 3'phosphoglycerate, inhibited by orthophosphate. Allosteric regulation. Functionally, this protein plays a role in synthesis of starch. It catalyzes the synthesis of the activated glycosyl donor, ADP-glucose from Glc-1-P and ATP. This Vicia faba (Broad bean) protein is Glucose-1-phosphate adenylyltransferase small subunit 1, chloroplastic (AGPC).